Reading from the N-terminus, the 248-residue chain is Carbohydrate deacetylase 2 (248 aa).

Positions 59 and 123 each coordinate Mg(2+).

It belongs to the YdjC deacetylase family. As to quaternary structure, homodimer. The cofactor is Mg(2+).

Functionally, probably catalyzes the deacetylation of acetylated carbohydrates an important step in the degradation of oligosaccharides. The chain is Carbohydrate deacetylase 2 from Listeria innocua serovar 6a (strain ATCC BAA-680 / CLIP 11262).